A 303-amino-acid polypeptide reads, in one-letter code: MTEFIFLVLSPNQEVQRVCFVIFLFLYTAIVLGNFLIVLTVMTSRSLGSPMYFFLSYLSFMEICYSSATAPKLISDLLAERKVISWWGCMAQLFFLHFFGGTEIFLLTVMAYDHYVAICKPLSYTTIMNWQVCTVLVGIAWVGGFMHSFAQILLIFHLLFCGPNVINHYFCDLVPLLKLACSDTFLIGLLIVANGGTLSVISFGVLLASYMVILLHLRTWSSEGWCKALSTCGSHFAVVILFFGPCVFNSLRPSTTLPIDKMVAVFYTVITAILNPVIYSLRNAEMRKAMKRLWIRTLRLNEK.

Residues 1–17 (MTEFIFLVLSPNQEVQR) lie on the Extracellular side of the membrane. The chain crosses the membrane as a helical span at residues 18–41 (VCFVIFLFLYTAIVLGNFLIVLTV). Residues 42–49 (MTSRSLGS) lie on the Cytoplasmic side of the membrane. A helical transmembrane segment spans residues 50–71 (PMYFFLSYLSFMEICYSSATAP). Residues 72 to 92 (KLISDLLAERKVISWWGCMAQ) lie on the Extracellular side of the membrane. C89 and C181 are disulfide-bonded. The helical transmembrane segment at 93–112 (LFFLHFFGGTEIFLLTVMAY) threads the bilayer. Topologically, residues 113–131 (DHYVAICKPLSYTTIMNWQ) are cytoplasmic. A helical transmembrane segment spans residues 132-150 (VCTVLVGIAWVGGFMHSFA). Residues 151-187 (QILLIFHLLFCGPNVINHYFCDLVPLLKLACSDTFLI) are Extracellular-facing. The chain crosses the membrane as a helical span at residues 188–211 (GLLIVANGGTLSVISFGVLLASYM). Residues 212–227 (VILLHLRTWSSEGWCK) lie on the Cytoplasmic side of the membrane. Residues 228–250 (ALSTCGSHFAVVILFFGPCVFNS) form a helical membrane-spanning segment. Residues 251–261 (LRPSTTLPIDK) are Extracellular-facing. Residues 262–281 (MVAVFYTVITAILNPVIYSL) traverse the membrane as a helical segment. Topologically, residues 282–303 (RNAEMRKAMKRLWIRTLRLNEK) are cytoplasmic.

This sequence belongs to the G-protein coupled receptor 1 family.

The protein resides in the cell membrane. Functionally, odorant receptor. This is Olfactory receptor 4X2 (OR4X2) from Homo sapiens (Human).